The sequence spans 309 residues: Homoserine O-succinyltransferase (309 aa).

Cys142 serves as the catalytic Acyl-thioester intermediate. 2 residues coordinate substrate: Lys163 and Ser192. His235 serves as the catalytic Proton acceptor. Residue Glu237 is part of the active site. Substrate is bound at residue Arg249.

Belongs to the MetA family.

It localises to the cytoplasm. It carries out the reaction L-homoserine + succinyl-CoA = O-succinyl-L-homoserine + CoA. The protein operates within amino-acid biosynthesis; L-methionine biosynthesis via de novo pathway; O-succinyl-L-homoserine from L-homoserine: step 1/1. Functionally, transfers a succinyl group from succinyl-CoA to L-homoserine, forming succinyl-L-homoserine. This chain is Homoserine O-succinyltransferase, found in Yersinia enterocolitica serotype O:8 / biotype 1B (strain NCTC 13174 / 8081).